A 64-amino-acid chain; its full sequence is uncharacterized protein (64 aa).

Positions 1–26 are cleaved as a signal peptide; sequence MVVKENFCGACLTIPLAFAGAGTAIG. Residues 33–53 form a helical membrane-spanning segment; sequence IKKWSIVITIISLLLTVWFIY.

The protein belongs to the IIV-6 010R family.

Its subcellular location is the host membrane. This is an uncharacterized protein from Aedes vexans (Inland floodwater mosquito).